The sequence spans 129 residues: Small ribosomal subunit protein bS16m (129 aa).

This sequence belongs to the bacterial ribosomal protein bS16 family. In terms of assembly, component of the mitochondrial ribosome small subunit (28S) which comprises a 12S rRNA and about 30 distinct proteins.

It is found in the mitochondrion. This Drosophila melanogaster (Fruit fly) protein is Small ribosomal subunit protein bS16m (mRpS16).